The primary structure comprises 322 residues: Transcriptional activator protein Pur-alpha (322 aa).

The disordered stretch occupies residues 1–55; it reads MADRDSGSEQGGAALGSGGSLGHPGSGSGSGGGGGGGGGGGGSGGGGGGAPGGLQ. Ala2 carries the N-acetylalanine modification. Residues 9–52 are compositionally biased toward gly residues; that stretch reads EQGGAALGSGGSLGHPGSGSGSGGGGGGGGGGGGSGGGGGGAPG. Residues 60-125 form a PUR repeat I repeat; it reads ELASKRVDIQ…DFIEHYAQLG (66 aa). Residues 142–213 form a PUR repeat II repeat; sequence ALKSEFLVRE…KLIDDYGVEE (72 aa). Phosphoserine is present on Ser182. The PUR repeat III repeat unit spans residues 215–281; that stretch reads PAELPEGTSL…CKYSEEMKKI (67 aa). The span at 295 to 314 shows a compositional bias: low complexity; sequence LHQQQQQQQEETAAATLLLQ. Residues 295-322 are disordered; sequence LHQQQQQQQEETAAATLLLQGEEEGEED.

Belongs to the PUR DNA-binding protein family. As to quaternary structure, homodimer, heterodimer with PURB and heterotrimer with PURB and YBX1/Y-box protein 1. Interacts with FMR1; this interaction occurs in association with polyribosome.

The protein localises to the nucleus. Its function is as follows. This is a probable transcription activator that specifically binds the purine-rich single strand of the PUR element located upstream of the MYC gene. May play a role in the initiation of DNA replication and in recombination. This is Transcriptional activator protein Pur-alpha (PURA) from Homo sapiens (Human).